We begin with the raw amino-acid sequence, 670 residues long: Leucine zipper putative tumor suppressor 2 (670 aa).

Disordered stretches follow at residues Met1–Gly52, Asn92–Ser131, and Pro150–Glu323. Residues Met1–Lys333 are required for centrosomal localization. Over residues Ala187–Ala199 the composition is skewed to low complexity. A compositionally biased stretch (polar residues) spans Pro213–Thr233. Low complexity-rich tracts occupy residues Ser242 to Gly251 and Pro260 to Arg310. Ser249 and Ser296 each carry phosphoserine. Pro residues predominate over residues Ser311 to Ser321. Positions Val329 to Asp650 form a coiled coil. Residues Ser448–Ile670 form a sufficient for interaction with CTNNB1 region. The segment at Ile451 to Ile670 is sufficient for interaction with KATNB1 and for inhibition of katanin-mediated microtubule severing. Phosphoserine is present on Ser571. Positions Leu632–Leu641 match the Nuclear export signal motif.

The protein belongs to the LZTS2 family. As to quaternary structure, interacts with CTNNB1. Interacts with KATNB1. Also interacts with gamma-tubulin and KIF23.

Its subcellular location is the cytoplasm. It localises to the cytoskeleton. It is found in the microtubule organizing center. The protein resides in the centrosome. Negative regulator of katanin-mediated microtubule severing and release from the centrosome. Required for central spindle formation and the completion of cytokinesis. May negatively regulate axonal outgrowth by preventing the formation of microtubule bundles that are necessary for transport within the elongating axon. Negative regulator of the Wnt signaling pathway. Represses beta-catenin-mediated transcriptional activation by promoting the nuclear exclusion of beta-catenin. This chain is Leucine zipper putative tumor suppressor 2 (Lzts2), found in Rattus norvegicus (Rat).